The sequence spans 210 residues: Proteasome subunit beta (210 aa).

The propeptide at 1–10 is removed in mature form; by autocatalysis; it reads MKELDQLTKG. Catalysis depends on threonine 11, which acts as the Nucleophile.

The protein belongs to the peptidase T1B family. In terms of assembly, the 20S proteasome core is composed of 14 alpha and 14 beta subunits that assemble into four stacked heptameric rings, resulting in a barrel-shaped structure. The two inner rings, each composed of seven catalytic beta subunits, are sandwiched by two outer rings, each composed of seven alpha subunits. The catalytic chamber with the active sites is on the inside of the barrel. Has a gated structure, the ends of the cylinder being occluded by the N-termini of the alpha-subunits. Is capped at one or both ends by the proteasome regulatory ATPase, PAN.

It is found in the cytoplasm. The enzyme catalyses Cleavage of peptide bonds with very broad specificity.. The formation of the proteasomal ATPase PAN-20S proteasome complex, via the docking of the C-termini of PAN into the intersubunit pockets in the alpha-rings, triggers opening of the gate for substrate entry. Interconversion between the open-gate and close-gate conformations leads to a dynamic regulation of the 20S proteasome proteolysis activity. In terms of biological role, component of the proteasome core, a large protease complex with broad specificity involved in protein degradation. The protein is Proteasome subunit beta of Methanopyrus kandleri (strain AV19 / DSM 6324 / JCM 9639 / NBRC 100938).